Consider the following 172-residue polypeptide: Large ribosomal subunit protein bL17 (172 aa).

Residues 123-172 form a disordered region; that stretch reads ATGSKRAQTEEAASQEPAAEAGKQPAEGATSVQTAEAADASQAEGEAEEK. Over residues 132-143 the composition is skewed to low complexity; the sequence is EEAASQEPAAEA.

Belongs to the bacterial ribosomal protein bL17 family. In terms of assembly, part of the 50S ribosomal subunit. Contacts protein L32.

This chain is Large ribosomal subunit protein bL17, found in Thermobifida fusca (strain YX).